We begin with the raw amino-acid sequence, 189 residues long: Elongation factor P (189 aa).

The residue at position 34 (Lys-34) is an N6-(3,6-diaminohexanoyl)-5-hydroxylysine.

It belongs to the elongation factor P family. May be beta-lysylated on the epsilon-amino group of Lys-34 by the combined action of EpmA and EpmB, and then hydroxylated on the C5 position of the same residue by EpmC (if this protein is present). Lysylation is critical for the stimulatory effect of EF-P on peptide-bond formation. The lysylation moiety may extend toward the peptidyltransferase center and stabilize the terminal 3-CCA end of the tRNA. Hydroxylation of the C5 position on Lys-34 may allow additional potential stabilizing hydrogen-bond interactions with the P-tRNA.

The protein localises to the cytoplasm. It participates in protein biosynthesis; polypeptide chain elongation. In terms of biological role, involved in peptide bond synthesis. Alleviates ribosome stalling that occurs when 3 or more consecutive Pro residues or the sequence PPG is present in a protein, possibly by augmenting the peptidyl transferase activity of the ribosome. Modification of Lys-34 is required for alleviation. The protein is Elongation factor P of Acinetobacter baumannii (strain AB307-0294).